Here is a 203-residue protein sequence, read N- to C-terminus: MNVPFVIETTHRGERAYDLYSRLLKDRIIMLGTPVNDDVANIIVAQLLFLESEDPDKGINLYINSPGGSVTAGLAIYDTMQYVKCPVSTICVGQAASMGALLLLAGAKGKRYALPNSRIMIHQPLGGAQGQATDIDIQAKEILRLRSYINGLIVKHTGHTIERIEKDTERDYFMSAEDARQYGLIDEVVEKQRVIAPTPAPAK.

The active-site Nucleophile is the Ser-97. The active site involves His-122.

This sequence belongs to the peptidase S14 family. In terms of assembly, fourteen ClpP subunits assemble into 2 heptameric rings which stack back to back to give a disk-like structure with a central cavity, resembling the structure of eukaryotic proteasomes.

Its subcellular location is the cytoplasm. It carries out the reaction Hydrolysis of proteins to small peptides in the presence of ATP and magnesium. alpha-casein is the usual test substrate. In the absence of ATP, only oligopeptides shorter than five residues are hydrolyzed (such as succinyl-Leu-Tyr-|-NHMec, and Leu-Tyr-Leu-|-Tyr-Trp, in which cleavage of the -Tyr-|-Leu- and -Tyr-|-Trp bonds also occurs).. Functionally, cleaves peptides in various proteins in a process that requires ATP hydrolysis. Has a chymotrypsin-like activity. Plays a major role in the degradation of misfolded proteins. This Myxococcus xanthus (strain DK1622) protein is ATP-dependent Clp protease proteolytic subunit 2.